Consider the following 276-residue polypeptide: Type II pantothenate kinase (276 aa).

8-15 contributes to the ATP binding site; it reads DAGGTLTK. The Proton acceptor role is filled by glutamate 76. Residues threonine 105, 127-131, phenylalanine 143, and serine 230 contribute to the ATP site; that span reads GGTIM.

Belongs to the type II pantothenate kinase family. Homodimer.

It is found in the cytoplasm. The catalysed reaction is (R)-pantothenate + ATP = (R)-4'-phosphopantothenate + ADP + H(+). Its pathway is cofactor biosynthesis; coenzyme A biosynthesis; CoA from (R)-pantothenate: step 1/5. Functionally, catalyzes the phosphorylation of pantothenate (Pan), the first step in CoA biosynthesis. The protein is Type II pantothenate kinase of Bacillus anthracis.